A 296-amino-acid chain; its full sequence is Polyadenylate-binding protein 2-A (296 aa).

The segment at 1 to 106 (MAAVSSVASL…GELTGDQTIE (106 aa)) is disordered. A compositionally biased stretch (gly residues) spans 71-82 (GRGGSGGGGAGG). The segment covering 84–97 (EELEDEELEEEEPG) has biased composition (acidic residues). Residues 107 to 141 (DPELEAIKARVREMEEEAEKLKELQNEVEKQMNMS) are a coiled coil. Positions 146–296 (NAGPVIMSVE…ARATSWYTPY (151 aa)) are necessary for homooligomerization. The RRM domain maps to 163–240 (RSIYVGNVDY…RQIKVVPKRT (78 aa)).

Monomer and homooligomer. Binds RNA as a monomer and oligomerizes when bound to poly(A). As to expression, shows dynamic spatial expression throughout development. First expressed in the animal pole region of the egg and this pattern persists through to the blastula stage. In gastrula and neurula embryos, expressed mainly in ectodermal, neural and epidermal regions. Neural tissue-specific expression pattern persists into tailbud stage when expression is localized to the brain and spinal cord. At early tadpole stage, expression becomes gradually confined to the specific vesicle regions of the developing brain. At stage 39, expressed in the telencephalon and mesencephalon regions of the brain. Also detected in the eye and olfactory pit at the tadpole stage. Expressed during gut endoderm development. At stage 35, expressed exclusively in the anterior portion of the gut endoderm, which includes the prospective liver, stomach and pancreas. As development proceeds, expression becomes restricted to the pancreas, and by stage 46/47 (the seventh day of development) expression is localized exclusively to the pancreas. Expressed in most adult tissues.

It localises to the nucleus. The protein localises to the cytoplasm. Involved in the 3'-end formation of mRNA precursors (pre-mRNA) by the addition of a poly(A) tail of 200-250 nt to the upstream cleavage product. Stimulates poly(A) polymerase (PAPOLA) conferring processivity on the poly(A) tail elongation reaction and also controls the poly(A) tail length. Increases the affinity of poly(A) polymerase for RNA. Binds to poly(A) and to poly(G) with high affinity. May protect the poly(A) tail from degradation. This is Polyadenylate-binding protein 2-A (pabpn1-a) from Xenopus laevis (African clawed frog).